The primary structure comprises 338 residues: Serpentine receptor class alpha-32 (338 aa).

7 helical membrane-spanning segments follow: residues Val30–Ile50, Ile63–Ile83, Arg120–Phe140, Gly152–Leu172, Leu199–Tyr219, Leu249–Ala269, and Thr289–Gly309.

The protein belongs to the nematode receptor-like protein sra family.

Its subcellular location is the membrane. In Caenorhabditis elegans, this protein is Serpentine receptor class alpha-32 (sra-32).